The following is a 370-amino-acid chain: Histidinol-phosphate aminotransferase (370 aa).

Position 231 is an N6-(pyridoxal phosphate)lysine (Lys231).

This sequence belongs to the class-II pyridoxal-phosphate-dependent aminotransferase family. Histidinol-phosphate aminotransferase subfamily. In terms of assembly, homodimer. Pyridoxal 5'-phosphate is required as a cofactor.

The catalysed reaction is L-histidinol phosphate + 2-oxoglutarate = 3-(imidazol-4-yl)-2-oxopropyl phosphate + L-glutamate. It functions in the pathway amino-acid biosynthesis; L-histidine biosynthesis; L-histidine from 5-phospho-alpha-D-ribose 1-diphosphate: step 7/9. The protein is Histidinol-phosphate aminotransferase of Paracidovorax citrulli (strain AAC00-1) (Acidovorax citrulli).